A 308-amino-acid chain; its full sequence is 4-hydroxy-3-methylbut-2-enyl diphosphate reductase (308 aa).

C12 contributes to the [4Fe-4S] cluster binding site. (2E)-4-hydroxy-3-methylbut-2-enyl diphosphate contacts are provided by H43 and H77. Positions 43 and 77 each coordinate dimethylallyl diphosphate. Positions 43 and 77 each coordinate isopentenyl diphosphate. C99 contacts [4Fe-4S] cluster. H127 is a binding site for (2E)-4-hydroxy-3-methylbut-2-enyl diphosphate. A dimethylallyl diphosphate-binding site is contributed by H127. Residue H127 coordinates isopentenyl diphosphate. The Proton donor role is filled by E129. T167 contributes to the (2E)-4-hydroxy-3-methylbut-2-enyl diphosphate binding site. C197 is a binding site for [4Fe-4S] cluster. S225, S226, N227, and S269 together coordinate (2E)-4-hydroxy-3-methylbut-2-enyl diphosphate. Dimethylallyl diphosphate contacts are provided by S225, S226, N227, and S269. 4 residues coordinate isopentenyl diphosphate: S225, S226, N227, and S269.

Belongs to the IspH family. [4Fe-4S] cluster serves as cofactor.

The catalysed reaction is isopentenyl diphosphate + 2 oxidized [2Fe-2S]-[ferredoxin] + H2O = (2E)-4-hydroxy-3-methylbut-2-enyl diphosphate + 2 reduced [2Fe-2S]-[ferredoxin] + 2 H(+). It catalyses the reaction dimethylallyl diphosphate + 2 oxidized [2Fe-2S]-[ferredoxin] + H2O = (2E)-4-hydroxy-3-methylbut-2-enyl diphosphate + 2 reduced [2Fe-2S]-[ferredoxin] + 2 H(+). Its pathway is isoprenoid biosynthesis; dimethylallyl diphosphate biosynthesis; dimethylallyl diphosphate from (2E)-4-hydroxy-3-methylbutenyl diphosphate: step 1/1. It functions in the pathway isoprenoid biosynthesis; isopentenyl diphosphate biosynthesis via DXP pathway; isopentenyl diphosphate from 1-deoxy-D-xylulose 5-phosphate: step 6/6. In terms of biological role, catalyzes the conversion of 1-hydroxy-2-methyl-2-(E)-butenyl 4-diphosphate (HMBPP) into a mixture of isopentenyl diphosphate (IPP) and dimethylallyl diphosphate (DMAPP). Acts in the terminal step of the DOXP/MEP pathway for isoprenoid precursor biosynthesis. The chain is 4-hydroxy-3-methylbut-2-enyl diphosphate reductase from Wolbachia pipientis subsp. Culex pipiens (strain wPip).